The following is a 333-amino-acid chain: Phosphoribosylformylglycinamidine cyclo-ligase (333 aa).

Belongs to the AIR synthase family.

The protein localises to the cytoplasm. The enzyme catalyses 2-formamido-N(1)-(5-O-phospho-beta-D-ribosyl)acetamidine + ATP = 5-amino-1-(5-phospho-beta-D-ribosyl)imidazole + ADP + phosphate + H(+). Its pathway is purine metabolism; IMP biosynthesis via de novo pathway; 5-amino-1-(5-phospho-D-ribosyl)imidazole from N(2)-formyl-N(1)-(5-phospho-D-ribosyl)glycinamide: step 2/2. The protein is Phosphoribosylformylglycinamidine cyclo-ligase of Methanococcoides burtonii (strain DSM 6242 / NBRC 107633 / OCM 468 / ACE-M).